A 448-amino-acid chain; its full sequence is C4-dicarboxylate transport protein (448 aa).

Helical transmembrane passes span 20 to 38, 53 to 75, 88 to 110, 161 to 178, 199 to 220, 230 to 252, 325 to 347, and 362 to 384; these read LYFQ…GHFY, IRLV…IAGM, AMIY…ANTV, ILQV…LGIV, LVAI…FTIG, LAML…LGAV, LFIA…LLVA, and FITL…ALIL.

The protein belongs to the dicarboxylate/amino acid:cation symporter (DAACS) (TC 2.A.23) family.

It localises to the cell inner membrane. In terms of biological role, responsible for the transport of dicarboxylates such as succinate, fumarate, and malate from the periplasm across the membrane. The protein is C4-dicarboxylate transport protein of Agrobacterium fabrum (strain C58 / ATCC 33970) (Agrobacterium tumefaciens (strain C58)).